We begin with the raw amino-acid sequence, 76 residues long: MAKRIKTPADIGALVRIVRKEQNLRQDELAGVAGVGLRFIVDLEAGKPTAQIGKVLQVLQTLGCSIDILAPGERRK.

The HTH cro/C1-type domain maps to 15-69 (VRIVRKEQNLRQDELAGVAGVGLRFIVDLEAGKPTAQIGKVLQVLQTLGCSIDIL). Positions 26-45 (QDELAGVAGVGLRFIVDLEA) form a DNA-binding region, H-T-H motif.

This is an uncharacterized protein from Sinorhizobium fredii (strain NBRC 101917 / NGR234).